The chain runs to 311 residues: 4-hydroxy-3-methylbut-2-enyl diphosphate reductase (311 aa).

Cys-12 contributes to the [4Fe-4S] cluster binding site. His-41 and His-74 together coordinate (2E)-4-hydroxy-3-methylbut-2-enyl diphosphate. His-41 and His-74 together coordinate dimethylallyl diphosphate. Isopentenyl diphosphate contacts are provided by His-41 and His-74. A [4Fe-4S] cluster-binding site is contributed by Cys-96. Residue His-124 participates in (2E)-4-hydroxy-3-methylbut-2-enyl diphosphate binding. His-124 contributes to the dimethylallyl diphosphate binding site. An isopentenyl diphosphate-binding site is contributed by His-124. The Proton donor role is filled by Glu-126. Thr-167 provides a ligand contact to (2E)-4-hydroxy-3-methylbut-2-enyl diphosphate. Residue Cys-197 coordinates [4Fe-4S] cluster. Positions 225, 226, 227, and 269 each coordinate (2E)-4-hydroxy-3-methylbut-2-enyl diphosphate. Residues Ser-225, Ser-226, Asn-227, and Ser-269 each contribute to the dimethylallyl diphosphate site. 4 residues coordinate isopentenyl diphosphate: Ser-225, Ser-226, Asn-227, and Ser-269.

This sequence belongs to the IspH family. Requires [4Fe-4S] cluster as cofactor.

The catalysed reaction is isopentenyl diphosphate + 2 oxidized [2Fe-2S]-[ferredoxin] + H2O = (2E)-4-hydroxy-3-methylbut-2-enyl diphosphate + 2 reduced [2Fe-2S]-[ferredoxin] + 2 H(+). It carries out the reaction dimethylallyl diphosphate + 2 oxidized [2Fe-2S]-[ferredoxin] + H2O = (2E)-4-hydroxy-3-methylbut-2-enyl diphosphate + 2 reduced [2Fe-2S]-[ferredoxin] + 2 H(+). Its pathway is isoprenoid biosynthesis; dimethylallyl diphosphate biosynthesis; dimethylallyl diphosphate from (2E)-4-hydroxy-3-methylbutenyl diphosphate: step 1/1. It participates in isoprenoid biosynthesis; isopentenyl diphosphate biosynthesis via DXP pathway; isopentenyl diphosphate from 1-deoxy-D-xylulose 5-phosphate: step 6/6. Functionally, catalyzes the conversion of 1-hydroxy-2-methyl-2-(E)-butenyl 4-diphosphate (HMBPP) into a mixture of isopentenyl diphosphate (IPP) and dimethylallyl diphosphate (DMAPP). Acts in the terminal step of the DOXP/MEP pathway for isoprenoid precursor biosynthesis. The polypeptide is 4-hydroxy-3-methylbut-2-enyl diphosphate reductase (Aeromonas salmonicida (strain A449)).